The sequence spans 492 residues: N-succinylglutamate 5-semialdehyde dehydrogenase (492 aa).

220 to 225 (GSASTG) provides a ligand contact to NAD(+). Active-site residues include Glu-243 and Cys-277.

It belongs to the aldehyde dehydrogenase family. AstD subfamily.

It catalyses the reaction N-succinyl-L-glutamate 5-semialdehyde + NAD(+) + H2O = N-succinyl-L-glutamate + NADH + 2 H(+). It participates in amino-acid degradation; L-arginine degradation via AST pathway; L-glutamate and succinate from L-arginine: step 4/5. In terms of biological role, catalyzes the NAD-dependent reduction of succinylglutamate semialdehyde into succinylglutamate. The sequence is that of N-succinylglutamate 5-semialdehyde dehydrogenase from Salmonella dublin (strain CT_02021853).